The primary structure comprises 145 residues: uncharacterized protein (145 aa).

The disordered stretch occupies residues 1 to 59; it reads MSTGTPHYAADRSKSRKSNNNRSIPFRTPTTQKVVKTSIRLGPVNPPTPTRNTQGGHGF.

This is an uncharacterized protein from Caenorhabditis elegans.